The primary structure comprises 160 residues: Small ribosomal subunit protein bS6 (160 aa).

Residues 100–160 (PSSVLARKSD…DDARETAGAE (61 aa)) form a disordered region. Composition is skewed to basic and acidic residues over residues 106–116 (RKSDDRGDRGN) and 136–160 (RSSE…AGAE).

It belongs to the bacterial ribosomal protein bS6 family.

In terms of biological role, binds together with bS18 to 16S ribosomal RNA. The polypeptide is Small ribosomal subunit protein bS6 (Gluconobacter oxydans (strain 621H) (Gluconobacter suboxydans)).